The following is a 191-amino-acid chain: Signal peptidase complex catalytic subunit sec11 (191 aa).

Topologically, residues 1-18 (MLSALGGNLSNARQSIAQ) are cytoplasmic. A helical; Signal-anchor for type II membrane protein membrane pass occupies residues 19-39 (VLNFALVLSTAFMLWKGVSIA). Over 40 to 191 (SNSSSPIVVV…MGLMVILQRE (152 aa)) the chain is Lumenal. Asparagine 41 carries N-linked (GlcNAc...) asparagine glycosylation. Residues serine 53, histidine 92, and aspartate 133 each act as charge relay system in the active site. The C-terminal short (CTS) helix stretch occupies residues 177–188 (VLLGVMGLMVIL).

It belongs to the peptidase S26B family. As to quaternary structure, component of the signal peptidase complex (SPC) composed of a catalytic subunit SEC11 and three accessory subunits SPC1, SPC2 and SPC3. The complex induces a local thinning of the ER membrane which is used to measure the length of the signal peptide (SP) h-region of protein substrates. This ensures the selectivity of the complex towards h-regions shorter than 18-20 amino acids. SPC associates with the translocon complex.

The protein resides in the endoplasmic reticulum membrane. The enzyme catalyses Cleavage of hydrophobic, N-terminal signal or leader sequences from secreted and periplasmic proteins.. Functionally, catalytic component of the signal peptidase complex (SPC) which catalyzes the cleavage of N-terminal signal sequences from nascent proteins as they are translocated into the lumen of the endoplasmic reticulum. Specifically cleaves N-terminal signal peptides that contain a hydrophobic alpha-helix (h-region) shorter than 18-20 amino acids. The polypeptide is Signal peptidase complex catalytic subunit sec11 (sec11) (Talaromyces marneffei (strain ATCC 18224 / CBS 334.59 / QM 7333) (Penicillium marneffei)).